Here is a 311-residue protein sequence, read N- to C-terminus: R2-like ligand binding oxidase (311 aa).

The Mn(2+) site is built by E68, E101, and H104. Residues 71–162 constitute a cross-link (3-(O4'-tyrosyl)-valine (Val-Tyr)); that stretch reads VTQDIQPFMA…AAQVRASVTY (92 aa). E101 contributes to the Fe cation binding site. Fe cation-binding residues include E167, E202, and H205.

Belongs to the ribonucleoside diphosphate reductase small chain family. R2-like ligand binding oxidase subfamily. As to quaternary structure, homodimer. Fe cation serves as cofactor. Mn(2+) is required as a cofactor.

Its function is as follows. Probable oxidase that might be involved in lipid metabolism. This is R2-like ligand binding oxidase from Mycolicibacterium paratuberculosis (strain ATCC BAA-968 / K-10) (Mycobacterium paratuberculosis).